A 732-amino-acid polypeptide reads, in one-letter code: MSYHPGHGHRQEPRKGAGARRGFARPDDSADAPRTGPLIFEERSTENAGAAPPIEEQLKVHNNPYASLNIQQQRIRLPIFKNRGHILYMCERYRTIIIVGETGCGKSTQVPQFLLEAGWAADGRQIVITQPRRVAVVTLATRVAEEKDCILGHDVGYTVRFDDVSDKDTKVKFMTDGLLLREILADPLLSKYSIIMIDEAHERSCNTDILLGLLRKIIQIRNDLRIIVSSATLDAELFKDFFEMNETGNSDKDTAGIISVEGRTHPVAVHHTKTSVPDYCQSAVDTVINIHKHENPGDILVFLTGQDEVEDVCEKLRELAGNLKNCDRLWVVPCYGALPAREQMKAFDSTPHGTRKVVVATNIAEASITIPGICYVIDTGYVKLRAQHAANGVETLMRVTVSKASAEQRAGRAGRIRPGKCYRLYPESEFERFAEGTVPEIQRCQMASTILQLKALGVQNVHRFHYLSPPPSWAMINGLELLYALGAIDETSQLTSPLGLQMAEFPLPPMHSKCLLKSAEFGCSTEMVTIVAMMQIQDVFITPYRQRHQADVIRKKFAVEEGDHMTMLNVFTKFVENGRSKKWCSDHFVNYRGLMRADNVRSQLVRLLKRFEIEKVSSRGLINCSENIRQCLVTGFFSQAAQYHYTGKYMTVKESFPFNMYKGSSIMFKKDYPKWVIFTEVMQDSIRDVTVIEPEWLYELAPHYYEFGTEGELAEKRMRGPAATSAAADDDY.

The segment at Met-1–Ala-50 is disordered. The region spanning Leu-87 to Asp-251 is the Helicase ATP-binding domain. Gly-100–Ser-107 serves as a coordination point for ATP. A DEAH box motif is present at residues Asp-198–His-201. Positions Ala-283–Gly-457 constitute a Helicase C-terminal domain.

It belongs to the DEAD box helicase family. DEAH subfamily.

The catalysed reaction is ATP + H2O = ADP + phosphate + H(+). The sequence is that of Probable ATP-dependent RNA helicase DHX35 homolog from Caenorhabditis elegans.